A 158-amino-acid polypeptide reads, in one-letter code: Adenosine 5'-monophosphoramidase HNT1 (158 aa).

The HIT domain maps to I26 to L129. AMP contacts are provided by residues D51 to I52, N103, H109 to E111, and H116 to H118. A Histidine triad motif motif is present at residues H114–H118. Residue H116 is the Tele-AMP-histidine intermediate of the active site.

This sequence belongs to the HINT family. In terms of assembly, homodimer. Interacts with KIN28. It depends on Mg(2+) as a cofactor.

It carries out the reaction adenosine 5'-phosphoramidate + H2O = AMP + NH4(+). In terms of biological role, hydrolyzes adenosine 5'-monophosphoramidate substrates such as AMP-morpholidate, AMP-N-alanine methyl ester, AMP-alpha-acetyl lysine methyl ester and AMP-NH2. Plays a role in the regulation of kinase KIN28 function. Essential for growth on galactose media at elevated temperatures. The protein is Adenosine 5'-monophosphoramidase HNT1 of Saccharomyces cerevisiae (strain ATCC 204508 / S288c) (Baker's yeast).